We begin with the raw amino-acid sequence, 141 residues long: Regulator of ribonuclease activity B (141 aa).

Residues 112–141 (GTYFEDPNAPDDEDDNDDLFPPEEDEPRLH) are disordered. Over residues 119–141 (NAPDDEDDNDDLFPPEEDEPRLH) the composition is skewed to acidic residues.

Belongs to the RraB family. In terms of assembly, interacts with the C-terminal region of Rne.

The protein localises to the cytoplasm. Functionally, globally modulates RNA abundance by binding to RNase E (Rne) and regulating its endonucleolytic activity. Can modulate Rne action in a substrate-dependent manner by altering the composition of the degradosome. This Xenorhabdus nematophila (strain ATCC 19061 / DSM 3370 / CCUG 14189 / LMG 1036 / NCIMB 9965 / AN6) protein is Regulator of ribonuclease activity B.